The following is a 78-amino-acid chain: Pancreatic polypeptide prohormone (78 aa).

Residues 1 to 19 (LLLSTCVALLLQPPLGALG) form the signal peptide. Tyr55 bears the Tyrosine amide mark.

Belongs to the NPY family.

The protein localises to the secreted. Functionally, hormone secreted by pancreatic cells that acts as a regulator of pancreatic and gastrointestinal functions probably by signaling through the G protein-coupled receptor NPY4R2. This Ovis aries (Sheep) protein is Pancreatic polypeptide prohormone (PPY).